The chain runs to 499 residues: Leukocyte immunoglobulin-like receptor subfamily A member 4 (499 aa).

The N-terminal stretch at 1–23 is a signal peptide; sequence MTLILTSLLFFGLSLGPRTRVQA. Ig-like C2-type domains lie at 24-118, 123-213, 224-313, and 324-413; these read ENLL…LVVT, PTLS…SDPL, PSLL…DPLD, and PSLS…SEPL. Over 24–446 the chain is Extracellular; the sequence is ENLLKPILWA…PHLQDYTVEN (423 aa). A disulfide bridge connects residues Cys-49 and Cys-98. A glycan (N-linked (GlcNAc...) asparagine) is linked at Asn-138. A disulfide bridge connects residues Cys-143 and Cys-195. N-linked (GlcNAc...) asparagine glycans are attached at residues Asn-239, Asn-279, and Asn-300. Cys-244 and Cys-295 are joined by a disulfide. A disulfide bridge links Cys-344 with Cys-395. Tyr-404 carries the 3'-nitrotyrosine modification. Residues 447–467 form a helical membrane-spanning segment; the sequence is LIRMGVAGLVLLFLGILLFEA. Residues 468 to 499 lie on the Cytoplasmic side of the membrane; it reads QHSQRSPPRCSQEANSRKDNAPFRVVEPWEQI.

Interacts with FCER1G; this stabilizes the expression of both proteins at the cell membrane. Interacts with BST2; leads to activation of LILRA4-mediated signaling and down-regulation of the innate immune response to viral pathogens. Detected on plasmacytoid dendritic cells (at protein level). Detected on plasmacytoid dendritic cells, but not on monocytes or B cells.

It is found in the cell membrane. Its function is as follows. Functions coreceptor to limit the innate immune responses to viral infections; signaling occurs via FCER1G. Down-regulates the production of IFNA1, IFNA2, IFNA4, IFNB1 and TNF by plasmacytoid dendritic cells that have been exposed to influenza virus or cytidine-phosphate-guanosine (CpG) dinucleotides, indicating it functions as a negative regulator of TLR7 and TLR9 signaling cascades. Down-regulates interferon production in response to interaction with BST2 on HIV-1 infected cells. Activates a signaling cascade in complex with FCER1G that results in phosphorylation of Src family and Syk kinases and thereby triggers mobilization of intracellular Ca(2+). Does not interfere with the differentiation of plasmacytoid dendritic cells into antigen-presenting cells. The sequence is that of Leukocyte immunoglobulin-like receptor subfamily A member 4 from Homo sapiens (Human).